Reading from the N-terminus, the 710-residue chain is Chloride channel protein CLC-e (710 aa).

The next 12 helical transmembrane spans lie at 74-94 (ELAI…VVLF), 122-142 (IGSN…VVSI), 164-184 (VKAV…LGTG), 193-213 (SVEI…KSPQ), 222-242 (GSAA…FFAV), 261-281 (TTSM…IGLG), 296-316 (PGEL…SLAL), 340-360 (VFPV…PEVL), 379-399 (GLSA…TAWC), 412-432 (SLFI…LALA), 451-471 (GLVG…TAVL), and 472-492 (LLFE…AVGM). A disordered region spans residues 500–534 (QSKRQETRETKETRKRKSQEAVQSLTSSDDESSTN). Over residues 502 to 511 (KRQETRETKE) the composition is skewed to basic and acidic residues. Residues 520–534 (AVQSLTSSDDESSTN) show a composition bias toward polar residues. CBS domains lie at 565–624 (MRTR…GNNR) and 640–702 (KCKV…ATRM). A helical membrane pass occupies residues 667-687 (HVAVVSGSIDAPRIHPVGVLD).

It belongs to the chloride channel (TC 2.A.49) family. In terms of assembly, homodimer.

It localises to the membrane. It carries out the reaction 2 chloride(in) + H(+)(out) = 2 chloride(out) + H(+)(in). Functionally, voltage-gated thylakoid chloride (Cl) channel/transporter involved in chloride homeostasis after transition from light to dark. Influences chloroplast ultrastructure and subsequent photosynthetic electron transport. During photosynthetic response on transition from dark to low light, involved in a sequential mechanism of adaptation; VCCN1 and CLCe first trigger the activation of photoprotection, which is later down-regulated by KEA3 to a low steady state, while adjusting electron transport. Regulates photosynthesis by a pH-independent mechanism likely involving Cl(-) homeostasis. The sequence is that of Chloride channel protein CLC-e from Arabidopsis thaliana (Mouse-ear cress).